The primary structure comprises 220 residues: Probable septum site-determining protein MinC (220 aa).

This sequence belongs to the MinC family. In terms of assembly, interacts with MinD and FtsZ.

In terms of biological role, cell division inhibitor that blocks the formation of polar Z ring septums. Rapidly oscillates between the poles of the cell to destabilize FtsZ filaments that have formed before they mature into polar Z rings. Prevents FtsZ polymerization. This Vibrio campbellii (strain ATCC BAA-1116) protein is Probable septum site-determining protein MinC.